The chain runs to 131 residues: Large ribosomal subunit protein bL12 (131 aa).

Belongs to the bacterial ribosomal protein bL12 family. In terms of assembly, homodimer. Part of the ribosomal stalk of the 50S ribosomal subunit. Forms a multimeric L10(L12)X complex, where L10 forms an elongated spine to which 2 to 4 L12 dimers bind in a sequential fashion. Binds GTP-bound translation factors.

Forms part of the ribosomal stalk which helps the ribosome interact with GTP-bound translation factors. Is thus essential for accurate translation. The sequence is that of Large ribosomal subunit protein bL12 from Prochlorococcus marinus (strain MIT 9515).